The chain runs to 773 residues: Protein FAM149A (773 aa).

Composition is skewed to low complexity over residues 18–37 and 54–90; these read TSTA…AAAA and LLRA…AAGA. Disordered stretches follow at residues 18–155, 173–210, 232–264, and 568–613; these read TSTA…RELG, DIGE…DSLP, FSSS…TERG, and TQNE…PWRL. Residues 174 to 186 show a composition bias toward acidic residues; it reads IGEEGASDGDSGD. Over residues 245-264 the composition is skewed to low complexity; it reads TSWSGSATQSSTTGSSTERG.

It belongs to the FAM149 family.

This is Protein FAM149A (FAM149A) from Homo sapiens (Human).